The following is a 322-amino-acid chain: Lymphokine-activated killer T-cell-originated protein kinase (322 aa).

An N-acetylmethionine modification is found at M1. Phosphothreonine occurs at positions 9 and 24. Phosphoserine is present on S32. The 291-residue stretch at 32 to 322 folds into the Protein kinase domain; it reads SPFMQKLGFG…HIVEALETDV (291 aa). ATP is bound at residue 38–46; sequence LGFGTGVNV. Phosphoserine is present on S59. K64 provides a ligand contact to ATP. Catalysis depends on D167, which acts as the Proton acceptor. K169 participates in a covalent cross-link: Glycyl lysine isopeptide (Lys-Gly) (interchain with G-Cter in SUMO2). The interval 320–322 is PDZ-interaction; that stretch reads TDV.

This sequence belongs to the protein kinase superfamily. STE Ser/Thr protein kinase family. MAP kinase kinase subfamily. In terms of assembly, interacts with DLG1 and TP53. Post-translationally, phosphorylated; in a cell-cycle dependent manner at mitosis. In terms of tissue distribution, expressed in the testis and placenta. In the testis, restrictedly expressed in outer cell layer of seminiferous tubules.

It carries out the reaction L-seryl-[protein] + ATP = O-phospho-L-seryl-[protein] + ADP + H(+). The enzyme catalyses L-threonyl-[protein] + ATP = O-phospho-L-threonyl-[protein] + ADP + H(+). It catalyses the reaction L-tyrosyl-[protein] + ATP = O-phospho-L-tyrosyl-[protein] + ADP + H(+). Its activity is regulated as follows. Activated by phosphorylation. Its function is as follows. Phosphorylates MAP kinase p38. Seems to be active only in mitosis. May also play a role in the activation of lymphoid cells. When phosphorylated, forms a complex with TP53, leading to TP53 destabilization and attenuation of G2/M checkpoint during doxorubicin-induced DNA damage. The protein is Lymphokine-activated killer T-cell-originated protein kinase (PBK) of Homo sapiens (Human).